The chain runs to 255 residues: 7alpha-hydroxysteroid dehydrogenase (255 aa).

NAD(+) is bound by residues Ile-23, 42-43, 68-69, and Asn-95; these read DI. Residues Gly-99, Ser-146, Asn-151, and Tyr-159 each coordinate glycochenodeoxycholate. NAD(+) is bound by residues Tyr-159, Lys-163, and 192–194; that span reads ILT. The active-site Proton acceptor is Tyr-159.

This sequence belongs to the short-chain dehydrogenases/reductases (SDR) family. As to quaternary structure, homotetramer.

It carries out the reaction cholate + NAD(+) = 3alpha,12alpha-dihydroxy-7-oxo-5beta-cholanate + NADH + H(+). The enzyme catalyses chenodeoxycholate + NAD(+) = 7-oxolithocholate + NADH + H(+). The catalysed reaction is taurochenodeoxycholate + NAD(+) = 7-oxotaurolithocholate + NADH + H(+). It catalyses the reaction taurocholate + NAD(+) = 7-oxo-taurodeoxycholate + NADH + H(+). It carries out the reaction glycocholate + NAD(+) = 7-oxo-glycodeoxycholate + NADH + H(+). The enzyme catalyses glycochenodeoxycholate + NAD(+) = 7-oxoglycolithocholate + NADH + H(+). Functionally, 7alpha-hydroxysteroid dehydrogenase involved in the metabolism of bile acids. Catalyzes the NAD(+)-dependent oxidation of the 7alpha-hydroxy group of 7alpha-hydroxysteroids, such as the major human bile acids cholate and chenodeoxycholate, to the corresponding 7-oxosteroids. To a lesser extent, can also act on taurochenodeoxycholate, taurocholate and glycocholate. Can also use glycochenodeoxycholate as substrate. Is not able to use NADP(+) instead of NAD(+) as the electron acceptor. The chain is 7alpha-hydroxysteroid dehydrogenase (hdhA) from Escherichia coli O157:H7.